A 383-amino-acid polypeptide reads, in one-letter code: 3-phytase (383 aa).

A signal peptide spans methionine 1–alanine 26. The propeptide occupies lysine 27 to leucine 30. A BPP domain is found at serine 31–isoleucine 362. Positions phenylalanine 364 to lysine 383 are disordered. Residues valine 372–lysine 383 show a composition bias toward basic and acidic residues.

It is found in the secreted. It catalyses the reaction 1D-myo-inositol hexakisphosphate + H2O = 1D-myo-inositol 1,2,4,5,6-pentakisphosphate + phosphate. The polypeptide is 3-phytase (phy) (Bacillus sp. (strain DS11)).